Here is a 533-residue protein sequence, read N- to C-terminus: D-3-phosphoglycerate dehydrogenase (533 aa).

Position 2 is an N-acetylalanine (alanine 2). Serine 14 bears the Phosphoserine mark. Position 21 is an N6-acetyllysine; alternate (lysine 21). Residue lysine 21 forms a Glycyl lysine isopeptide (Lys-Gly) (interchain with G-Cter in SUMO1); alternate linkage. A Glycyl lysine isopeptide (Lys-Gly) (interchain with G-Cter in SUMO2); alternate cross-link involves residue lysine 21. Residue lysine 58 is modified to N6-acetyllysine. NAD(+) contacts are provided by residues threonine 78, arginine 155 to isoleucine 156, aspartate 175, threonine 207, cysteine 234 to arginine 236, and aspartate 260. At threonine 78 the chain carries Phosphothreonine. Arginine 236 is an active-site residue. Residue glutamate 265 is part of the active site. Histidine 283 serves as the catalytic Proton donor. Residue histidine 283 to alanine 286 coordinates NAD(+).

This sequence belongs to the D-isomer specific 2-hydroxyacid dehydrogenase family. As to quaternary structure, homotetramer. As to expression, liver, kidney, brain, testis.

It carries out the reaction (2R)-3-phosphoglycerate + NAD(+) = 3-phosphooxypyruvate + NADH + H(+). Its pathway is amino-acid biosynthesis; L-serine biosynthesis; L-serine from 3-phospho-D-glycerate: step 1/3. Functionally, catalyzes the reversible oxidation of 3-phospho-D-glycerate to 3-phosphonooxypyruvate, the first step of the phosphorylated L-serine biosynthesis pathway. Does not catalyze the reversible oxidation of 2-hydroxyglutarate to 2-oxoglutarate and the reversible oxidation of (S)-malate to oxaloacetate. This is D-3-phosphoglycerate dehydrogenase (Phgdh) from Rattus norvegicus (Rat).